Reading from the N-terminus, the 313-residue chain is Type II restriction enzyme BsuMI component YdiR (313 aa).

The segment at F289 to N313 is disordered.

BsuMI restriction activity requires YdiR, YdiS and YdjA.

It catalyses the reaction Endonucleolytic cleavage of DNA to give specific double-stranded fragments with terminal 5'-phosphates.. Functionally, a P subtype restriction enzyme that recognizes the double-stranded sequence 5'-CTCGAG-3'; the cleavage site is unknown. This chain is Type II restriction enzyme BsuMI component YdiR (ydiR), found in Bacillus subtilis (strain 168).